Here is a 361-residue protein sequence, read N- to C-terminus: Phosphoserine aminotransferase (361 aa).

Arg-43 provides a ligand contact to L-glutamate. Pyridoxal 5'-phosphate contacts are provided by residues 77 to 78, Trp-103, Thr-153, Asp-173, and Gln-196; that span reads AS. Lys-197 is subject to N6-(pyridoxal phosphate)lysine. 238-239 serves as a coordination point for pyridoxal 5'-phosphate; the sequence is NT.

This sequence belongs to the class-V pyridoxal-phosphate-dependent aminotransferase family. SerC subfamily. As to quaternary structure, homodimer. Requires pyridoxal 5'-phosphate as cofactor.

The protein resides in the cytoplasm. It carries out the reaction O-phospho-L-serine + 2-oxoglutarate = 3-phosphooxypyruvate + L-glutamate. The catalysed reaction is 4-(phosphooxy)-L-threonine + 2-oxoglutarate = (R)-3-hydroxy-2-oxo-4-phosphooxybutanoate + L-glutamate. It functions in the pathway amino-acid biosynthesis; L-serine biosynthesis; L-serine from 3-phospho-D-glycerate: step 2/3. In terms of biological role, catalyzes the reversible conversion of 3-phosphohydroxypyruvate to phosphoserine and of 3-hydroxy-2-oxo-4-phosphonooxybutanoate to phosphohydroxythreonine. The chain is Phosphoserine aminotransferase (serC) from Alkalihalobacillus alcalophilus (Bacillus alcalophilus).